A 570-amino-acid polypeptide reads, in one-letter code: Sulfite reductase [NADPH] hemoprotein beta-component (570 aa).

The [4Fe-4S] cluster site is built by cysteine 434, cysteine 440, cysteine 479, and cysteine 483. Cysteine 483 is a binding site for siroheme.

The protein belongs to the nitrite and sulfite reductase 4Fe-4S domain family. Alpha(8)-beta(8). The alpha component is a flavoprotein, the beta component is a hemoprotein. The cofactor is siroheme. [4Fe-4S] cluster serves as cofactor.

The enzyme catalyses hydrogen sulfide + 3 NADP(+) + 3 H2O = sulfite + 3 NADPH + 4 H(+). It functions in the pathway sulfur metabolism; hydrogen sulfide biosynthesis; hydrogen sulfide from sulfite (NADPH route): step 1/1. Its function is as follows. Component of the sulfite reductase complex that catalyzes the 6-electron reduction of sulfite to sulfide. This is one of several activities required for the biosynthesis of L-cysteine from sulfate. This chain is Sulfite reductase [NADPH] hemoprotein beta-component, found in Escherichia coli O1:K1 / APEC.